Here is a 410-residue protein sequence, read N- to C-terminus: Interstrand DNA cross-link repair glycosylase (410 aa).

The short motif at 45 to 47 (QID) is the QXD; important for activity element.

This sequence belongs to the DNA glycosylase AlkZ-like family.

Functionally, DNA glycosylase involved in the repair of interstrand DNA cross-links (ICLs), which are highly toxic DNA lesions that covalently tether the opposing strands of DNA, thereby inhibiting essential cellular processes such as DNA replication and transcription. Acts by unhooking both sides of the ICLs, forming abasic (AP) sites on both strands. Unhooks ICLs derived from various cross-linking agents, including azinomycin B (AZB) and mechlorethamine, also known as nitrogen mustard (NM), protecting cells from the toxicity of these cross-linking agents. In vitro, also acts on monoadducts and can catalyze the excision of N7-methylguanine (7mGua) from an oligonucleotide containing N7-methyldeoxyguanosine (d7mG). Shows no unhooking activity toward FaPy-ICLs. In Escherichia coli (strain K12), this protein is Interstrand DNA cross-link repair glycosylase (ycaQ).